We begin with the raw amino-acid sequence, 489 residues long: 6-phosphogluconate dehydrogenase, decarboxylating 1 (489 aa).

Residues 9–14 (GLAVMG) and 32–34 (NRT) each bind NADP(+). S50 bears the Phosphoserine mark. NADP(+) is bound by residues 74–76 (VKA) and N102. Residues N102 and 128 to 130 (SGG) contribute to the substrate site. Residue K182 is the Proton acceptor of the active site. A substrate-binding site is contributed by 185-186 (HN). Catalysis depends on E189, which acts as the Proton donor. Substrate is bound by residues Y190, K259, R286, R446, and H452.

The protein belongs to the 6-phosphogluconate dehydrogenase family. In terms of assembly, homodimer.

It is found in the cytoplasm. It carries out the reaction 6-phospho-D-gluconate + NADP(+) = D-ribulose 5-phosphate + CO2 + NADPH. Its pathway is carbohydrate degradation; pentose phosphate pathway; D-ribulose 5-phosphate from D-glucose 6-phosphate (oxidative stage): step 3/3. Its function is as follows. Catalyzes the oxidative decarboxylation of 6-phosphogluconate to ribulose 5-phosphate and CO(2), with concomitant reduction of NADP to NADPH. This Saccharomyces cerevisiae (strain ATCC 204508 / S288c) (Baker's yeast) protein is 6-phosphogluconate dehydrogenase, decarboxylating 1 (GND1).